Consider the following 128-residue polypeptide: UPF0325 protein NT01EI_0832 (128 aa).

The protein belongs to the UPF0325 family.

The sequence is that of UPF0325 protein NT01EI_0832 from Edwardsiella ictaluri (strain 93-146).